A 436-amino-acid polypeptide reads, in one-letter code: GTPase Der (436 aa).

2 EngA-type G domains span residues 4 to 167 (PTIA…PNEE) and 175 to 351 (IKFS…QSQN). GTP is bound by residues 10–17 (GRPNVGKS), 57–61 (DTGGI), 119–122 (NKVD), 181–188 (GRPNVGKS), 229–233 (DTAGM), and 294–297 (NKWD). Residues 352-436 (TRIPSAVLND…PIHLIARKRK (85 aa)) enclose the KH-like domain.

This sequence belongs to the TRAFAC class TrmE-Era-EngA-EngB-Septin-like GTPase superfamily. EngA (Der) GTPase family. In terms of assembly, associates with the 50S ribosomal subunit.

Its function is as follows. GTPase that plays an essential role in the late steps of ribosome biogenesis. The polypeptide is GTPase Der (Streptococcus sanguinis (strain SK36)).